The chain runs to 258 residues: (S)-hydroxynitrile lyase (258 aa).

One can recognise an AB hydrolase-1 domain in the interval 5 to 242 (HFVLIHTICH…GGDHKLQLTK (238 aa)). 2-hydroxy-2-methylpropanenitrile contacts are provided by Thr11 and Ser80. The acetone site is built by Thr11, Ser80, and Cys81. The active-site Proton donor/acceptor is the Ser80. Catalysis depends on His236, which acts as the Proton donor/acceptor.

Belongs to the AB hydrolase superfamily. Hydroxynitrile lyase family. In terms of assembly, homotetramer.

It catalyses the reaction a monosubstituted aliphatic (S)-hydroxynitrile = an aldehyde + hydrogen cyanide. The catalysed reaction is a disubstituted aliphatic (S)-hydroxynitrile = a ketone + hydrogen cyanide. The enzyme catalyses an aromatic (S)-hydroxynitrile = an aromatic aldehyde + hydrogen cyanide. It carries out the reaction 2-hydroxy-2-methylpropanenitrile = acetone + hydrogen cyanide. It catalyses the reaction butan-2-one + hydrogen cyanide = 2-hydroxy-2-methylbutanenitrile. The catalysed reaction is pentan-2-one + hydrogen cyanide = (2S)-2-hydroxy-2-methylpentanenitrile. The enzyme catalyses hexan-2-one + hydrogen cyanide = (2S)-2-hydroxy-2-methylhexanenitrile. It carries out the reaction heptan-2-one + hydrogen cyanide = (2S)-2-hydroxy-2-methylheptanenitrile. It catalyses the reaction 4-methylpentan-2-one + hydrogen cyanide = (2S)-2-hydroxy-2,4-dimethylpentanenitrile. The catalysed reaction is 3,3-dimethylbutan-2-one + hydrogen cyanide = (2S)-2-hydroxy-2-methyl-3,3-dimethylbutanenitrile. The enzyme catalyses acetophenone + hydrogen cyanide = (2S)-2-hydroxy-2-phenylpropanenitrile. It carries out the reaction propanal + hydrogen cyanide = (2S)-2-hydroxybutanenitrile. It catalyses the reaction pentanal + hydrogen cyanide = (2S)-2-hydroxyhexanenitrile. The catalysed reaction is 2-methylpropanal + hydrogen cyanide = (2S)-2-hydroxy-3-methylbutanenitrile. The enzyme catalyses 2,2-dimethylpropanal + hydrogen cyanide = (2S)-2-hydroxy-3,3-dimethylbutanenitrile. It carries out the reaction acrolein + hydrogen cyanide = (2S)-2-hydroxybut-3-enenitrile. It catalyses the reaction (2E)-but-2-enal + hydrogen cyanide = (2S,3E)-2-hydroxypent-3-enenitrile. The catalysed reaction is (E)-hex-2-enal + hydrogen cyanide = (2S,3E)-2-hydroxyhept-3-enenitrile. The enzyme catalyses cyclohexanecarbaldehyde + hydrogen cyanide = (2S)-2-cyclohexyl-2-hydroxyacetonitrile. It carries out the reaction benzaldehyde + hydrogen cyanide = (S)-mandelonitrile. It catalyses the reaction 4-methoxybenzaldehyde + hydrogen cyanide = (2S)-2-hydroxy-2-(4-methoxyphenyl)acetonitrile. The catalysed reaction is piperonal + hydrogen cyanide = (2S)-2-(2H-1,3-benzodioxol-5-yl)-2-hydroxyacetonitrile. The enzyme catalyses formylthiophene + hydrogen cyanide = (2R)-2-hydroxy-2-(thiophen-2-yl)acetonitrile. It carries out the reaction 3-formylthiophene + hydrogen cyanide = (2S)-2-hydroxy-2-(thiophen-3-yl)acetonitrile. It catalyses the reaction furan-3-carbaldehyde + hydrogen cyanide = (2S)-2-(furan-3-yl)-2-hydroxyacetonitrile. In terms of biological role, involved in cyanogenesis, the release of HCN from cyanogenic glycosides in injured tissues; the release of toxic HCN is believed to play a central role in the defense mechanism of plants against herbivores and microbial attack. Decomposes a variety of cyanohydrins (alpha-hydroxynitriles) into HCN and the corresponding aldehydes or ketones; two natural substrates are 2-hydroxy-2-methylpropanenitrile (acetone cyanohydrin) and 2-hydroxy-2-methylbutanenitrile (2-butanone cyanohydrin), but in vitro can also act on 2-hydroxy-2-methylpentanenitrile (2-pentanone cyanohydrin) and mandelonitrile. Is also able to catalyze the reverse reaction in vitro, leading to the stereospecific synthesis of aliphatic, aromatic, and heterocyclic cyanohydrins, important intermediates in the production of various agrochemicals or pharmaceuticals. The polypeptide is (S)-hydroxynitrile lyase (Manihot esculenta (Cassava)).